We begin with the raw amino-acid sequence, 365 residues long: MRFECSHFPLFLIILTCHISPLKSSQNYQWSYDSDVFGGPHFWGLVEKDWWMCKKGRLQSPIDIQPDRLLFDASVKPVSYAELNFFLIIYLTISLKLMRYIFTCAHLFACNKKLGTWNRIFGANIAKFRAWVVYIIIFHAQVPQLQVVSEFVNTGQMVRVRIGYSSKKPSVNITSGPLYGYRYRVQRIDFHMGRKNENGSEHTINGRRFPMEVQLVAYNTDLYPNFTSASKSPHGIAILSVLVDFGPETNQELIKLTIATASISYKDQRVQLADFEPWRLLPFTRDIITYEGSLTSPGCHETVTWIILNQPIFIKKEHFEEWSHLYLSMEGAEKVPVAPNFRKIQETNNRLVRTNIQHKVWIFLS.

An N-terminal signal peptide occupies residues 1 to 25 (MRFECSHFPLFLIILTCHISPLKSS). In terms of domain architecture, Alpha-carbonic anhydrase spans 28 to 356 (YQWSYDSDVF…TNNRLVRTNI (329 aa)). The active site involves Tyr223. Residues Thr295 and 295–296 (TS) each bind substrate.

It belongs to the alpha-carbonic anhydrase family.

The protein localises to the secreted. The polypeptide is Putative carbonic anhydrase-like protein 1 (cah-1) (Caenorhabditis elegans).